We begin with the raw amino-acid sequence, 267 residues long: 2-keto-3-deoxy-L-rhamnonate aldolase (267 aa).

His49 acts as the Proton acceptor in catalysis. Gln151 is a binding site for substrate. Glu153 contacts Mg(2+). Ala178 and Asp179 together coordinate substrate. Asp179 is a Mg(2+) binding site.

The protein belongs to the HpcH/HpaI aldolase family. KDR aldolase subfamily. In terms of assembly, homohexamer. It depends on Mg(2+) as a cofactor.

It carries out the reaction 2-dehydro-3-deoxy-L-rhamnonate = (S)-lactaldehyde + pyruvate. Its function is as follows. Catalyzes the reversible retro-aldol cleavage of 2-keto-3-deoxy-L-rhamnonate (KDR) to pyruvate and lactaldehyde. The protein is 2-keto-3-deoxy-L-rhamnonate aldolase of Salmonella agona (strain SL483).